Reading from the N-terminus, the 205-residue chain is Thymidine kinase (205 aa).

ATP-binding positions include 9–16 (SAMNAGKS) and 87–90 (DECQ). Catalysis depends on E88, which acts as the Proton acceptor. Zn(2+) contacts are provided by C145, C147, C182, and H185.

It belongs to the thymidine kinase family. As to quaternary structure, homotetramer.

The protein localises to the cytoplasm. It carries out the reaction thymidine + ATP = dTMP + ADP + H(+). This is Thymidine kinase from Shigella dysenteriae serotype 1 (strain Sd197).